The following is a 269-amino-acid chain: Mitochondrial scaffolding protein 1 (269 aa).

Residues 49–121 enclose the PDZ domain; it reads VVEIEKTSKG…HDEAVEVFRS (73 aa). The segment at 143-185 is disordered; sequence RTQTPTASVSITPQVTPQTRSTQNNTDTPKSMSHSESKSRLTS. Over residues 145-174 the composition is skewed to polar residues; it reads QTPTASVSITPQVTPQTRSTQNNTDTPKSM. Residues 240 to 262 form a helical membrane-spanning segment; that stretch reads WLTEALYVSIGLGALTISGYLAY.

The protein resides in the membrane. In terms of biological role, plays a role in the regulation of lifespan in a partially daf-16-mediated manner, and may be involved in regulating the levels of reactive oxygen species production in response to heat stress. The sequence is that of Mitochondrial scaffolding protein 1 from Caenorhabditis elegans.